A 423-amino-acid chain; its full sequence is AP-1 complex subunit mu-2 (423 aa).

Residues 168 to 421 (KNEVFIDVIE…ITQSGDYQLR (254 aa)) enclose the MHD domain.

It belongs to the adaptor complexes medium subunit family. As to quaternary structure, adaptor protein complex 1 (AP-1) is a heterotetramer composed of two large adaptins (gamma-type subunit AP1G1 and beta-type subunit AP1B1), a medium adaptin (mu-type subunit AP1M1 or AP1M2) and a small adaptin (sigma-type subunit AP1S1 or AP1S2 or AP1S3). Interacts with P2X4. Phosphorylation of membrane-bound AP1M1/AP1M2 increases its affinity for sorting signals.

It is found in the golgi apparatus. The protein localises to the cytoplasmic vesicle. It localises to the clathrin-coated vesicle membrane. In terms of biological role, subunit of clathrin-associated adaptor protein complex 1 that plays a role in protein sorting in the trans-Golgi network (TGN) and endosomes. The AP complexes mediate the recruitment of clathrin to membranes and the recognition of sorting signals within the cytosolic tails of transmembrane cargo molecules. This chain is AP-1 complex subunit mu-2 (Ap1m2), found in Mus musculus (Mouse).